The primary structure comprises 457 residues: Argininosuccinate lyase (457 aa).

This sequence belongs to the lyase 1 family. Argininosuccinate lyase subfamily.

It is found in the cytoplasm. The catalysed reaction is 2-(N(omega)-L-arginino)succinate = fumarate + L-arginine. It functions in the pathway amino-acid biosynthesis; L-arginine biosynthesis; L-arginine from L-ornithine and carbamoyl phosphate: step 3/3. The protein is Argininosuccinate lyase of Escherichia coli O157:H7.